Reading from the N-terminus, the 122-residue chain is UPF0102 protein R00337 (122 aa).

This sequence belongs to the UPF0102 family.

The protein is UPF0102 protein R00337 of Rhizobium meliloti (strain 1021) (Ensifer meliloti).